A 251-amino-acid polypeptide reads, in one-letter code: Probable transcriptional regulatory protein MAB_2888c (251 aa).

The interval 1–20 (MSGHSKWATTKHQKAVKDAR) is disordered.

This sequence belongs to the TACO1 family.

The protein resides in the cytoplasm. This is Probable transcriptional regulatory protein MAB_2888c from Mycobacteroides abscessus (strain ATCC 19977 / DSM 44196 / CCUG 20993 / CIP 104536 / JCM 13569 / NCTC 13031 / TMC 1543 / L948) (Mycobacterium abscessus).